The primary structure comprises 401 residues: Argininosuccinate synthase (401 aa).

Residues 8-16 and A35 contribute to the ATP site; that span reads AYSGGLDTS. L-citrulline contacts are provided by Y86 and S91. Residue G116 coordinates ATP. L-aspartate contacts are provided by T118, N122, and D123. Residue N122 coordinates L-citrulline. R126, S175, S184, E260, and Y272 together coordinate L-citrulline.

This sequence belongs to the argininosuccinate synthase family. Type 1 subfamily. As to quaternary structure, homotetramer.

Its subcellular location is the cytoplasm. It catalyses the reaction L-citrulline + L-aspartate + ATP = 2-(N(omega)-L-arginino)succinate + AMP + diphosphate + H(+). Its pathway is amino-acid biosynthesis; L-arginine biosynthesis; L-arginine from L-ornithine and carbamoyl phosphate: step 2/3. This chain is Argininosuccinate synthase, found in Carboxydothermus hydrogenoformans (strain ATCC BAA-161 / DSM 6008 / Z-2901).